The sequence spans 761 residues: Zinc finger protein 287 (761 aa).

Residues 49 to 131 enclose the SCAN box domain; that stretch reads RQNFRNFPYP…TLVEDLTQIL (83 aa). A disordered region spans residues 134 to 154; sequence EAPQNSTLSQDTPEEDPRGKH. A KRAB domain is found at 170–238; sequence MTFKDVAVDI…IKEILEGPSP (69 aa). C2H2-type zinc fingers lie at residues 368-390, 396-418, 424-446, 452-474, 480-502, 508-530, 536-558, 564-586, 592-614, 620-642, 648-670, 676-698, 704-726, and 732-754; these read YKCNVCGKKFRKYPSLLKHQSTH, YECEECGKEFRHISSLIAHQRMH, YECHQCGKAFSQRAHLTIHQRIH, YKCDDCGKDFSQRAHLTIHQRTH, YKCLECGKTFSHSSSLINHQRVH, YICNECGKTFSQSTHLLQHQKIH, YKCNECWKVFSQSTYLIRHQRIH, YKCNECGKAFAHSSTLIQHQTTH, YICNICGKAFSQSANLTQHHRTH, YKCSVCGKAFSQSVHLTQHQRIH, FKCNICGKAYRQGANLTQHQRIH, YKCNECGKAFIYSSSLNQHQRTH, YKCNECDKDFSQRTCLIQHQRIH, and YACRICGKTFTQSTNLIQHQRVH.

This sequence belongs to the krueppel C2H2-type zinc-finger protein family.

The protein localises to the nucleus. Its function is as follows. May be involved in transcriptional regulation. In Homo sapiens (Human), this protein is Zinc finger protein 287.